Consider the following 547-residue polypeptide: Serine/threonine-protein kinase RIO2 (547 aa).

The 177-residue stretch at 97–273 (VGNQMGVGKE…RDVKCIREFF (177 aa)) folds into the Protein kinase domain. Position 123 (lysine 123) interacts with ATP. Residue aspartate 228 is the Proton acceptor of the active site. 6 positions are modified to phosphoserine: serine 332, serine 337, serine 350, serine 362, serine 385, and serine 390. The tract at residues 352-385 (LEKEADPADESGGSWCCSSTDSKQIKDGGLPEES) is disordered. Positions 399 to 408 (AVEEMERQVL) match the Nuclear export signal motif. Residues 404-445 (ERQVLPHRSVTEFSEESRRTENDGQPGQRSPAGSEDCDDEPP) are disordered. 5 positions are modified to phosphoserine: serine 412, serine 417, serine 433, serine 437, and serine 543.

This sequence belongs to the protein kinase superfamily. RIO-type Ser/Thr kinase family. As to quaternary structure, associated with late 40S pre-ribosomal particles. Interacts with PLK1 (via its N-terminus). Mg(2+) is required as a cofactor. In terms of processing, autophosphorylated (in vitro). Phosphorylation affects the timing of the metaphase-anaphase transition.

It localises to the cytoplasm. The catalysed reaction is L-seryl-[protein] + ATP = O-phospho-L-seryl-[protein] + ADP + H(+). The enzyme catalyses L-threonyl-[protein] + ATP = O-phospho-L-threonyl-[protein] + ADP + H(+). Functionally, serine/threonine-protein kinase involved in the final steps of cytoplasmic maturation of the 40S ribosomal subunit. Involved in export of the 40S pre-ribosome particles (pre-40S) from the nucleus to the cytoplasm. Its kinase activity is required for the release of NOB1, PNO1 and LTV1 from the late pre-40S and the processing of 18S-E pre-rRNA to the mature 18S rRNA. May regulate the timing of the metaphase-anaphase transition during mitotic progression, and its phosphorylation, may regulate this function. This chain is Serine/threonine-protein kinase RIO2 (Riok2), found in Mus musculus (Mouse).